A 341-amino-acid polypeptide reads, in one-letter code: Phenylalanine--tRNA ligase alpha subunit (341 aa).

Glu-253 is a binding site for Mg(2+).

This sequence belongs to the class-II aminoacyl-tRNA synthetase family. Phe-tRNA synthetase alpha subunit type 1 subfamily. In terms of assembly, tetramer of two alpha and two beta subunits. The cofactor is Mg(2+).

It is found in the cytoplasm. The enzyme catalyses tRNA(Phe) + L-phenylalanine + ATP = L-phenylalanyl-tRNA(Phe) + AMP + diphosphate + H(+). This chain is Phenylalanine--tRNA ligase alpha subunit, found in Methylococcus capsulatus (strain ATCC 33009 / NCIMB 11132 / Bath).